The chain runs to 249 residues: Inner membrane protein pE248R (249 aa).

Residue G2 is the site of N-myristoyl glycine; by host attachment. The Cytoplasmic portion of the chain corresponds to 2–199; it reads GGSTSKNSFK…ADAISAVFKN (198 aa). The chain crosses the membrane as a helical span at residues 200–220; it reads IMVAAVVIVVIIVGFIAVFYF. Residues 221 to 249 are Extracellular-facing; it reads LHSRHRHEEEEEAEPLITSKILKNAAVSQ.

Belongs to the asfivirus E248R family. As to quaternary structure, interacts with A151R.

It is found in the host membrane. Its subcellular location is the virion membrane. In terms of biological role, essential for viral fusion with host endosomal membrane and core release. This is Inner membrane protein pE248R from African swine fever virus (isolate Pig/Kenya/KEN-50/1950) (ASFV).